Here is a 568-residue protein sequence, read N- to C-terminus: Protein phosphatase 1 regulatory inhibitor subunit 16B (568 aa).

The stretch at 15–55 (EKVPTLERLRAAQKRRAQQLKKWAQYEQDLLHRKRKHERKR) forms a coiled coil. Serine 69 is modified (phosphoserine). ANK repeat units lie at residues 100-129 (DGLT…NVNA), 133-162 (ELWT…DLLA), 228-257 (QGAT…RVDV), and 261-290 (DGWE…SLSA). 3 positions are modified to phosphoserine: serine 333, serine 337, and serine 350. Positions 373-403 (SAAEDQRTSTYNGDIRETRTDQENKDPNPRL) are disordered. Positions 386 to 403 (DIRETRTDQENKDPNPRL) are enriched in basic and acidic residues. Serine 477 is subject to Phosphoserine. Positions 505-517 (SSVARSGESSSEG) are enriched in low complexity. Residues 505 to 527 (SSVARSGESSSEGKAPLIGGRTS) form a disordered region. One copy of the ANK 5 repeat lies at 531-560 (SNGTSVYYTVTSGDPPLLKFKAPMEEMEEK). The S-palmitoyl cysteine moiety is linked to residue cysteine 564. Cysteine 565 is subject to Cysteine methyl ester. The S-farnesyl cysteine moiety is linked to residue cysteine 565. A propeptide spans 566–568 (RIS) (removed in mature form).

As to quaternary structure, interacts with PPP1CA, PPP1CB and MSN. Interacts (via its fourth ankyrin repeat) with the mature dimeric form of RPSA/LAMR1. Interacts with EEF1A1. Interacts with PTEN. Interacts with ECE1. Post-translationally, phosphorylated by PKA and, after PKA priming, by GSK3B. Phosphorylation by GSK3B reduces its association with PP1C and enhances PP1C activity. Dephosphorylation by its associated PP1C results in enhanced association with PP1C, but reduced PP1C activity.

The protein localises to the cell membrane. Its subcellular location is the nucleus. The protein resides in the cell projection. Regulator of protein phosphatase 1 (PP1) that acts as a positive regulator of pulmonary endothelial cell (EC) barrier function. Protects the endothelial barrier from lipopolysaccharide (LPS)-induced vascular leakage. Involved in the regulation of the PI3K/AKT signaling pathway. Involved in the regulation of angiogenesis and endothelial cell proliferation through the control of ECE1 dephosphorylation, trafficking and activity. Involved in the regulation of endothelial cell filopodia extension. May be a downstream target for TGF-beta1 signaling cascade in endothelial cells. Involved in PKA-mediated moesin dephosphorylation which is important in EC barrier protection against thrombin stimulation. Promotes the interaction of PPP1CA with RPSA/LAMR1 and in turn facilitates the dephosphorylation of RPSA/LAMR1. Involved in the dephosphorylation of EEF1A1. The sequence is that of Protein phosphatase 1 regulatory inhibitor subunit 16B (Ppp1r16b) from Mus musculus (Mouse).